Here is a 332-residue protein sequence, read N- to C-terminus: D-2-hydroxyacid dehydrogenase (NAD(+)) (332 aa).

Residues Arg237 and Glu266 contribute to the active site. His298 serves as the catalytic Proton donor.

Belongs to the D-isomer specific 2-hydroxyacid dehydrogenase family. Monomer.

The enzyme catalyses a (2R)-2-hydroxycarboxylate + NAD(+) = a 2-oxocarboxylate + NADH + H(+). It carries out the reaction (2R)-hydroxy-4-methylpentanoate + NAD(+) = 4-methyl-2-oxopentanoate + NADH + H(+). The protein operates within amino-acid degradation; L-leucine degradation. Its function is as follows. Involved in the reductive branch of L-leucine fermentation. Catalyzes the NADH-dependent reduction of 4-methyl-2-oxopentanoate (2-oxoisocaproate) to (R)-2-hydroxy-4-methylpentanoate ((R)-2-hydroxyisocaproate). For the reverse reaction, the enzyme accepts (R)- but not (S)-2-hydroxy-4-methylpentanoate. Can also use 2-oxopentanoate, 2-oxohexanoate and phenylpyruvate but not 2-oxoisovalerate and 2-oxobutyrate. Cannot use NADPH. The sequence is that of D-2-hydroxyacid dehydrogenase (NAD(+)) from Clostridioides difficile (Peptoclostridium difficile).